Consider the following 315-residue polypeptide: Replication factor C small subunit (315 aa).

43 to 50 is a binding site for ATP; sequence GSPGVGKT.

It belongs to the activator 1 small subunits family. RfcS subfamily. As to quaternary structure, heteromultimer composed of small subunits (RfcS) and large subunits (RfcL).

Part of the RFC clamp loader complex which loads the PCNA sliding clamp onto DNA. The protein is Replication factor C small subunit of Methanococcus maripaludis (strain C5 / ATCC BAA-1333).